A 102-amino-acid polypeptide reads, in one-letter code: MYAIIVTGGKQYKVEAGQAIYVEKLDAAAGDKVTFDQVVFVGGDTTKVGTPTVDGATVEGTVEKQGRDRKVVTFKYKAKKGQHTKKGHRQPYTKVTIDTINA.

Belongs to the bacterial ribosomal protein bL21 family. Part of the 50S ribosomal subunit. Contacts protein L20.

Its function is as follows. This protein binds to 23S rRNA in the presence of protein L20. The polypeptide is Large ribosomal subunit protein bL21 (Lactiplantibacillus plantarum (strain ATCC BAA-793 / NCIMB 8826 / WCFS1) (Lactobacillus plantarum)).